The chain runs to 701 residues: Elongation factor G 2 (701 aa).

One can recognise a tr-type G domain in the interval 8 to 290 (ERYRNIGISA…AVIDYLPSPA (283 aa)). GTP-binding positions include 17-24 (AHIDAGKT), 88-92 (DTPGH), and 142-145 (NKMD).

It belongs to the TRAFAC class translation factor GTPase superfamily. Classic translation factor GTPase family. EF-G/EF-2 subfamily.

It is found in the cytoplasm. Its function is as follows. Catalyzes the GTP-dependent ribosomal translocation step during translation elongation. During this step, the ribosome changes from the pre-translocational (PRE) to the post-translocational (POST) state as the newly formed A-site-bound peptidyl-tRNA and P-site-bound deacylated tRNA move to the P and E sites, respectively. Catalyzes the coordinated movement of the two tRNA molecules, the mRNA and conformational changes in the ribosome. The protein is Elongation factor G 2 of Cupriavidus pinatubonensis (strain JMP 134 / LMG 1197) (Cupriavidus necator (strain JMP 134)).